The chain runs to 59 residues: Large ribosomal subunit protein uL30 (59 aa).

Belongs to the universal ribosomal protein uL30 family. Part of the 50S ribosomal subunit.

This chain is Large ribosomal subunit protein uL30, found in Buchnera aphidicola subsp. Schizaphis graminum (strain Sg).